The sequence spans 66 residues: Cold shock protein CspC (66 aa).

A CSD domain is found at 4–63 (GTVKWFNAEKGFGFIERENGDDVFVHFSAIQSDGFKSLDEGQKVSFDVEQGARGAQAANV).

The protein resides in the cytoplasm. The polypeptide is Cold shock protein CspC (cspC) (Bacillus subtilis (strain 168)).